Consider the following 142-residue polypeptide: Deoxyuridine 5'-triphosphate nucleotidohydrolase (142 aa).

Substrate is bound by residues 62–64 (RSG), Asn75, and 79–81 (TID).

Belongs to the dUTPase family. Mg(2+) is required as a cofactor.

The catalysed reaction is dUTP + H2O = dUMP + diphosphate + H(+). It participates in pyrimidine metabolism; dUMP biosynthesis; dUMP from dCTP (dUTP route): step 2/2. This enzyme is involved in nucleotide metabolism: it produces dUMP, the immediate precursor of thymidine nucleotides and it decreases the intracellular concentration of dUTP so that uracil cannot be incorporated into DNA. This is Deoxyuridine 5'-triphosphate nucleotidohydrolase from Picosynechococcus sp. (strain ATCC 27264 / PCC 7002 / PR-6) (Agmenellum quadruplicatum).